The chain runs to 282 residues: Pantothenate synthetase (282 aa).

29–36 is a binding site for ATP; it reads MGFLHEGH. Histidine 36 functions as the Proton donor in the catalytic mechanism. Residue glutamine 60 participates in (R)-pantoate binding. Glutamine 60 serves as a coordination point for beta-alanine. 146-149 lines the ATP pocket; that stretch reads GEKD. Glutamine 152 is a (R)-pantoate binding site. ATP is bound by residues isoleucine 175 and 183-186; that span reads KSSR.

Belongs to the pantothenate synthetase family. Homodimer.

The protein localises to the cytoplasm. The catalysed reaction is (R)-pantoate + beta-alanine + ATP = (R)-pantothenate + AMP + diphosphate + H(+). It functions in the pathway cofactor biosynthesis; (R)-pantothenate biosynthesis; (R)-pantothenate from (R)-pantoate and beta-alanine: step 1/1. Catalyzes the condensation of pantoate with beta-alanine in an ATP-dependent reaction via a pantoyl-adenylate intermediate. The protein is Pantothenate synthetase of Clostridioides difficile (strain 630) (Peptoclostridium difficile).